The chain runs to 216 residues: Urease accessory protein UreG (216 aa).

GTP is bound at residue 25–32; it reads GPVGSGKT.

This sequence belongs to the SIMIBI class G3E GTPase family. UreG subfamily. Homodimer. UreD, UreF and UreG form a complex that acts as a GTP-hydrolysis-dependent molecular chaperone, activating the urease apoprotein by helping to assemble the nickel containing metallocenter of UreC. The UreE protein probably delivers the nickel.

It localises to the cytoplasm. Facilitates the functional incorporation of the urease nickel metallocenter. This process requires GTP hydrolysis, probably effectuated by UreG. The chain is Urease accessory protein UreG from Burkholderia pseudomallei (strain 1710b).